Here is a 263-residue protein sequence, read N- to C-terminus: Methylesterase 4 (263 aa).

Residue serine 84 is the Acyl-ester intermediate of the active site. Catalysis depends on charge relay system residues aspartate 213 and histidine 241.

The protein belongs to the AB hydrolase superfamily. Methylesterase family.

It carries out the reaction methyl salicylate + H2O = salicylate + methanol + H(+). It functions in the pathway plant hormone biosynthesis. Its activity is regulated as follows. Esterase activity is down-regulated by salicylic acid (SA). Functionally, methylesterase shown to have carboxylesterase activity and methyl salicylate (MeSA) esterase activity in vitro. The protein is Methylesterase 4 of Arabidopsis thaliana (Mouse-ear cress).